The chain runs to 455 residues: tRNA modification GTPase MnmE (455 aa).

Residues arginine 24, glutamate 81, and lysine 121 each coordinate (6S)-5-formyl-5,6,7,8-tetrahydrofolate. The TrmE-type G domain maps to 217 to 378; sequence GMKVVIAGRP…LREHLKDCMG (162 aa). Position 227 (asparagine 227) interacts with K(+). GTP is bound by residues 227–232, 246–252, 271–274, and 359–361; these read NAGKSS, TDIAGTT, DTAG, and SAR. Position 231 (serine 231) interacts with Mg(2+). Threonine 246, isoleucine 248, and threonine 251 together coordinate K(+). Threonine 252 contributes to the Mg(2+) binding site. Residue lysine 455 participates in (6S)-5-formyl-5,6,7,8-tetrahydrofolate binding.

It belongs to the TRAFAC class TrmE-Era-EngA-EngB-Septin-like GTPase superfamily. TrmE GTPase family. As to quaternary structure, homodimer. Heterotetramer of two MnmE and two MnmG subunits. It depends on K(+) as a cofactor.

The protein localises to the cytoplasm. Functionally, exhibits a very high intrinsic GTPase hydrolysis rate. Involved in the addition of a carboxymethylaminomethyl (cmnm) group at the wobble position (U34) of certain tRNAs, forming tRNA-cmnm(5)s(2)U34. This Photobacterium profundum (strain SS9) protein is tRNA modification GTPase MnmE.